A 346-amino-acid polypeptide reads, in one-letter code: Flap endonuclease 1 (346 aa).

The N-domain stretch occupies residues 1-102 (MGVTELGKLI…AEIEERRKTR (102 aa)). Mg(2+) is bound by residues aspartate 31, aspartate 84, glutamate 156, glutamate 158, aspartate 177, aspartate 179, and aspartate 239. The tract at residues 120-261 (DVAKYAKRAV…KALKLIWEFG (142 aa)) is I-domain.

The protein belongs to the XPG/RAD2 endonuclease family. FEN1 subfamily. In terms of assembly, interacts with PCNA. PCNA stimulates the nuclease activity without altering cleavage specificity. Mg(2+) serves as cofactor.

Structure-specific nuclease with 5'-flap endonuclease and 5'-3' exonuclease activities involved in DNA replication and repair. During DNA replication, cleaves the 5'-overhanging flap structure that is generated by displacement synthesis when DNA polymerase encounters the 5'-end of a downstream Okazaki fragment. Binds the unpaired 3'-DNA end and kinks the DNA to facilitate 5' cleavage specificity. Cleaves one nucleotide into the double-stranded DNA from the junction in flap DNA, leaving a nick for ligation. Also involved in the base excision repair (BER) pathway. Acts as a genome stabilization factor that prevents flaps from equilibrating into structures that lead to duplications and deletions. Also possesses 5'-3' exonuclease activity on nicked or gapped double-stranded DNA. This Pyrobaculum aerophilum (strain ATCC 51768 / DSM 7523 / JCM 9630 / CIP 104966 / NBRC 100827 / IM2) protein is Flap endonuclease 1.